Consider the following 100-residue polypeptide: Large ribosomal subunit protein uL23 (100 aa).

This sequence belongs to the universal ribosomal protein uL23 family. Part of the 50S ribosomal subunit. Contacts protein L29, and trigger factor when it is bound to the ribosome.

In terms of biological role, one of the early assembly proteins it binds 23S rRNA. One of the proteins that surrounds the polypeptide exit tunnel on the outside of the ribosome. Forms the main docking site for trigger factor binding to the ribosome. This Mycolicibacterium smegmatis (strain ATCC 700084 / mc(2)155) (Mycobacterium smegmatis) protein is Large ribosomal subunit protein uL23.